The sequence spans 336 residues: dTDP-glucose 4,6-dehydratase (336 aa).

Residues Gly7 to Gly13, Asp37 to Thr40, and Asp63 to Ile64 each bind NAD(+). Residue Thr87 participates in substrate binding. Residue Thr102 participates in NAD(+) binding. Substrate is bound at residue Thr127–Glu129. Catalysis depends on Asp128, which acts as the Proton donor. Catalysis depends on proton acceptor residues Glu129 and Tyr151. Tyr151–Lys155 provides a ligand contact to NAD(+). Asn180 contacts substrate. Asn181 lines the NAD(+) pocket. Residues Lys190–Leu191, Pro206–Tyr208, Arg215, Asn250, and Arg274–His277 each bind substrate.

The protein belongs to the NAD(P)-dependent epimerase/dehydratase family. dTDP-glucose dehydratase subfamily. As to quaternary structure, homodimer. NAD(+) is required as a cofactor.

The enzyme catalyses dTDP-alpha-D-glucose = dTDP-4-dehydro-6-deoxy-alpha-D-glucose + H2O. It functions in the pathway antibiotic biosynthesis; novobiocin biosynthesis. Functionally, dTDP-glucose 4,6-dehydratase involved in the generation of the deoxysugar in the novobiocin biosynthesis pathway, an aminocoumarin family antibiotic that targets bacterial DNA gyrases. The sequence is that of dTDP-glucose 4,6-dehydratase (novT) from Streptomyces niveus (Streptomyces spheroides).